The primary structure comprises 593 residues: MATCWQGLWAYRMYLLVFLLPISLLPLPILVPRKEAYCAYAIILMALFWCTDALPLAVTALLPLCLFPMMGIMEASEVGLEYLKDTNVLFIGGLLLAIAVEHWNLHKRIALRVLLLTGVRPALLILGFMVVTAFLSMWISNTASTAMMVPIAHAVLQELNNTQSNVEEGSDNPTFELQEPSPQKETSKVDEKDNGQAQPLPAVPLESGEHMTQEQLRFSQGMSLCVCYSASIGGIATLTGTTPNLVLQGQMTSLFPQNPNVVNFASWFGFAFPIMVILLLLSWLWLQILFLGINFRKNFGIREQEHEQQRKQAAYRVIQTQYRLLGPMSFAEKAVFILFVILVLLWFTREPGFFHGWGNLVFSDASGRVMVSDGSASILIGVFLFMVPSKIPGLTQDPDNPGRLKAPPALLNWKLVNKKMPWNIVLLLGGGYALAKGSEESGLSQWLGNKLMPLQHVPPPATVFIICLLVATFTECTSNAATTTLLLPILASMAQAICLHPLYVMLPCTLASSLAFMLPVATPPNAIVFSFGGLRVSDMARAGIMLNIIGVLVIMLAINSWGVPMFQLHTFPSWAHSNSTTHCLASPPTAPSP.

4 consecutive transmembrane segments (helical) span residues Tyr11–Val31, Ala53–Met73, Thr86–His106, and Pro121–Asn141. The segment covering Ser164 to Lys184 has biased composition (polar residues). The segment at Ser164–Pro204 is disordered. Residues Glu185–Asn194 show a composition bias toward basic and acidic residues. 8 helical membrane-spanning segments follow: residues Gly221–Thr241, Phe270–Phe290, Pro327–Phe347, Val369–Ser389, Leu451–Ala471, Leu485–Met505, Leu514–Leu534, and Gly543–Val563.

This sequence belongs to the SLC13A/DASS transporter (TC 2.A.47) family. NADC subfamily. Abundant in kidney and small intestine.

The protein resides in the apical cell membrane. It carries out the reaction succinate(out) + 3 Na(+)(out) = succinate(in) + 3 Na(+)(in). It catalyses the reaction fumarate(out) + 3 Na(+)(out) = fumarate(in) + 3 Na(+)(in). The enzyme catalyses 2-oxoglutarate(out) + 3 Na(+)(out) = 2-oxoglutarate(in) + 3 Na(+)(in). With respect to regulation, li(+) decreases succinate transport in the presence of Na(+), by competing at one of the three cation binding sites. Its function is as follows. Low-affinity sodium-dicarboxylate cotransporter, that mediates the entry of citric acid cycle intermediates, such as succinate, citrate, fumarate and alpha-ketoglutarate (2-oxoglutarate) into the small intestine and renal proximal tubule. Transports the dicarboxylate into the cell with a probable stoichiometry of 3 Na(+) for 1 divalent dicarboxylate, rendering the process electrogenic. Citrate is transported in protonated form as a divalent anion, rather than the trivalent form which is normally found in blood. Has a critical role in renal dicarboxylate transport. This Oryctolagus cuniculus (Rabbit) protein is Solute carrier family 13 member 2 (SLC13A2).